The following is a 594-amino-acid chain: Probable acyl-CoA dehydrogenase (594 aa).

Glutamate 405 serves as the catalytic Proton acceptor.

The protein belongs to the acyl-CoA dehydrogenase family. It depends on FAD as a cofactor.

The catalysed reaction is a 2,3-saturated acyl-CoA + A = a 2,3-dehydroacyl-CoA + AH2. The protein operates within lipid metabolism; fatty acid beta-oxidation. Functionally, involved in the degradation of long-chain fatty acids. This Bacillus subtilis (strain 168) protein is Probable acyl-CoA dehydrogenase (fadE).